A 488-amino-acid polypeptide reads, in one-letter code: Cytochrome P450 family 716 subfamily AD polypeptide 2 (488 aa).

Residues 5 to 25 (LLLLSTLLILTLCCHFFYLFI) form a helical membrane-spanning segment. C433 is a binding site for heme.

Belongs to the cytochrome P450 family. Heme is required as a cofactor. As to expression, expressed in maturing fruits and in juice vesicles.

It localises to the membrane. It carries out the reaction (1R,2R,3S,8R,10R,11R,15S,16S)-3-(acetyloxy)-15-[(4R)-4-[(2S)-3,3-dimethyloxiran-2-yl]-1,4-dihydroxybutan-2-yl]-2,7,7,11,16-pentamethyl-5-oxo-6-oxatetracyclo[9.7.0.0(2,8).0(12,16)]octadec-12-en-10-yl acetate + reduced [NADPH--hemoprotein reductase] + O2 = (1R,2R,3S,8R,10R,11R,15S,16S)-3-(acetyloxy)-15-(1-hydroxy-4-oxobutan-2-yl)-2,7,7,11,16-pentamethyl-5-oxo-6-oxatetracyclo[9.7.0.0(2,8).0(12,16)]octadec-12-en-10-yl acetate + 2-methylpropanoate + oxidized [NADPH--hemoprotein reductase] + H2O + 2 H(+). It participates in secondary metabolite biosynthesis; terpenoid biosynthesis. Its function is as follows. Monooxygenase involved in the biosynthesis of limonoids triterpene natural products such as limonin, a compound with insecticidal activity responsible for the bitter taste in citrus. Catalyzes the formation of (1R,2R,3S,8R,10R,11R,15S,16S)-3-(acetyloxy)-15-(1-hydroxy-4-oxobutan-2-yl)-2,7,7,11,16-pentamethyl-5-oxo-6-oxatetracyclo[9.7.0.0(2,8).0(12,16)]octadec-12-en-10-yl acetate. This is Cytochrome P450 family 716 subfamily AD polypeptide 2 from Citrus sinensis (Sweet orange).